We begin with the raw amino-acid sequence, 166 residues long: MQRVPMTKGGLVRLKDELRRLKSVERPKIVKEIAEARAHGDLSENAEYHAAKEKQSHIEGRIAQVEHWIASAEVIDVTKHAGDRVVFGATVSLEDAESGDQVTYRIVGELEADLKQGKISVTSPIARALIGRSEGDTVVVRSPGGEKEYEIQSVAFVEEELPTESE.

The protein belongs to the GreA/GreB family.

Necessary for efficient RNA polymerase transcription elongation past template-encoded arresting sites. The arresting sites in DNA have the property of trapping a certain fraction of elongating RNA polymerases that pass through, resulting in locked ternary complexes. Cleavage of the nascent transcript by cleavage factors such as GreA or GreB allows the resumption of elongation from the new 3'terminus. GreA releases sequences of 2 to 3 nucleotides. The chain is Transcription elongation factor GreA from Anaeromyxobacter sp. (strain K).